Here is a 121-residue protein sequence, read N- to C-terminus: Large ribosomal subunit protein bL20 (121 aa).

This sequence belongs to the bacterial ribosomal protein bL20 family.

Binds directly to 23S ribosomal RNA and is necessary for the in vitro assembly process of the 50S ribosomal subunit. It is not involved in the protein synthesizing functions of that subunit. This chain is Large ribosomal subunit protein bL20, found in Petrotoga mobilis (strain DSM 10674 / SJ95).